Consider the following 447-residue polypeptide: Probable glycine dehydrogenase (decarboxylating) subunit 1 (447 aa).

The protein belongs to the GcvP family. N-terminal subunit subfamily. As to quaternary structure, the glycine cleavage system is composed of four proteins: P, T, L and H. In this organism, the P 'protein' is a heterodimer of two subunits.

It carries out the reaction N(6)-[(R)-lipoyl]-L-lysyl-[glycine-cleavage complex H protein] + glycine + H(+) = N(6)-[(R)-S(8)-aminomethyldihydrolipoyl]-L-lysyl-[glycine-cleavage complex H protein] + CO2. The glycine cleavage system catalyzes the degradation of glycine. The P protein binds the alpha-amino group of glycine through its pyridoxal phosphate cofactor; CO(2) is released and the remaining methylamine moiety is then transferred to the lipoamide cofactor of the H protein. This is Probable glycine dehydrogenase (decarboxylating) subunit 1 from Sulfolobus acidocaldarius (strain ATCC 33909 / DSM 639 / JCM 8929 / NBRC 15157 / NCIMB 11770).